Reading from the N-terminus, the 360-residue chain is Putative transport protein BU123 (360 aa).

A run of 9 helical transmembrane segments spans residues 18-38 (IFIVSMGVISFLVIHPFILGF), 39-59 (FWASMIVIATWPLMLKIQKIL), 66-86 (AVIIMIIILLLLFIIPVFFLV), 161-181 (GLFIVHSILMLFFSALLYWNG), 204-224 (LLLATQAVRAVALGVAVTALI), 230-250 (GIGLLVSGVPYWALLMIIIFF), 251-271 (SCLIQLGPLPILIPSIIWLYW), 280-300 (ILLIWSCFVFILDHILRPFFI), and 316-336 (IGGLLTFGMIGLFIGPVVLVI).

Belongs to the autoinducer-2 exporter (AI-2E) (TC 2.A.86) family.

It localises to the cell membrane. This chain is Putative transport protein BU123, found in Buchnera aphidicola subsp. Acyrthosiphon pisum (strain APS) (Acyrthosiphon pisum symbiotic bacterium).